The chain runs to 911 residues: MFAPLLKKLFGSKNEREVKRMLKTVSIVNAFEEKMVALSDEQLRGKTAEFKERLAKGETLDQLLPEAFAVAREAGKRVMGMRHFDVQLIGGMTLHEGMIAEMRTGEGKTLVGTLAVYLNALSGKGVHVVTVNDYLARRDANWMRPLYEFLGLSVGIVSAFQPPEEKRAAYAADITYGTNNEFGFDYLRDNMAFSQDEKFQRELNFAVIDEVDSILIDEARTPLIISGQAEDSSKLYIEINRLIPRLTQHIEEVEGQVTQEGHFTIDEKSRQVELNEAGHQFIEEMLAQAGLLAEGESLYSAHNLGLLTHVYAGLRAHKLFHRNVEYIVQDGQVLLIDEHTGRTMPGRRLSEGLHQAIEAKENLNIQAESQTLASTTFQNYFRLYTKLSGMTGTADTEAFEFQSIYGLNVMVIPPNKPLARKDYNDLVYLTADEKYAAIIADIKESMKLGRPVLVGTATIETSEHMSNLLKKEGIDHKVLNAKYHEKEAEIIAQAGAPGALTIATNMAGRGTDILLGGNWEAEVAALENPTAEQIAQIKADWQKRHQQVIETGGLHVIASERHESRRIDNQLRGRSGRQGDPGSSRFYLSLEDSLMRIFASDRVKNFMKALGMQSGEAIEHRMVTNAIEKAQRKVEGRNFDIRKQLLEYDDVANEQRKVIYHMRNSLLAAENIGDTIVEFRKEVLDATISQHIPPQSLPEQWDVAGLEASLASDFAIKLPIQQWLDEDDHLYEETLREKLLSEITTAYTEKEDQAGLDALRTFEKQILLRVLDDLWKDHLSTMDHLRHGIHLRGYAQKNPKQEYKRESFSLFQELLESIKRDTIRVLSHVQVRREDPAEEEARLRREAEELASRMQFQHAAAPGLESEQLSEEGAEVAVASAPVRNDQKLGRNEPCWCGSGKKFKHCHGQIE.

ATP-binding positions include Q87, 105–109 (GEGKT), and D512. Residues 861–893 (APGLESEQLSEEGAEVAVASAPVRNDQKLGRNE) form a disordered region. Zn(2+)-binding residues include C895, C897, C906, and H907.

It belongs to the SecA family. Monomer and homodimer. Part of the essential Sec protein translocation apparatus which comprises SecA, SecYEG and auxiliary proteins SecDF-YajC and YidC. It depends on Zn(2+) as a cofactor.

Its subcellular location is the cell inner membrane. The protein resides in the cytoplasm. It carries out the reaction ATP + H2O + cellular proteinSide 1 = ADP + phosphate + cellular proteinSide 2.. Its function is as follows. Part of the Sec protein translocase complex. Interacts with the SecYEG preprotein conducting channel. Has a central role in coupling the hydrolysis of ATP to the transfer of proteins into and across the cell membrane, serving both as a receptor for the preprotein-SecB complex and as an ATP-driven molecular motor driving the stepwise translocation of polypeptide chains across the membrane. This Pseudomonas putida (strain ATCC 700007 / DSM 6899 / JCM 31910 / BCRC 17059 / LMG 24140 / F1) protein is Protein translocase subunit SecA.